Consider the following 926-residue polypeptide: BTB/POZ domain-containing protein KCTD19 (926 aa).

The region spanning 18 to 72 (NVGGWHFSVPRSKLSQFPDSLLWKEASALTSSESQRLFIDRDGSTFRHVHYYLYT) is the BTB 1 domain. Residue S270 is modified to Phosphoserine. The BTB 2 domain maps to 398–485 (IKVYVGSHWY…YHIPSLSEAL (88 aa)). The tract at residues 673–751 (GSEAASQPST…PAPEQPLPEA (79 aa)) is disordered. The segment covering 730 to 742 (DWSKQRTKERESP) has biased composition (basic and acidic residues).

Identified in a complex with ZNF541, HDAC1 and HSPA2. Identified in a complex with ZNF541 and HDAC1. Identified in a complex with HDAC1, HDAC2, DNTTIP1 and ZNF541.

Its subcellular location is the nucleus. Transcription regulator which is essential for male fertility and for the completion of meiotic prophase in spermatocytes. Regulates progression of the pachytene stage of meiotic prophase and promotes the transcriptional activation activity ZNF541. Required for the organization of chromosomes during metaphase I. This chain is BTB/POZ domain-containing protein KCTD19 (KCTD19), found in Homo sapiens (Human).